A 319-amino-acid chain; its full sequence is G-protein coupled receptor 55 (319 aa).

Over 1-21 (MSQQNTSGDCLFDGVNELMKT) the chain is Extracellular. N5 is a glycosylation site (N-linked (GlcNAc...) asparagine). The helical transmembrane segment at 22-42 (LQFAVHIPTFVLGLLLNLLAI) threads the bilayer. The Cytoplasmic portion of the chain corresponds to 43–58 (HGFSTFLKNRWPDYAA). A helical transmembrane segment spans residues 59 to 79 (TSIYMINLAVFDLLLVLSLPF). Topologically, residues 80-94 (KMVLSQVQSPFPSLC) are extracellular. Residues 95–115 (TLVECLYFVSMYGSVFTICFI) form a helical membrane-spanning segment. Over 116 to 137 (SMDRFLAIRYPLLVSHLRSPRK) the chain is Cytoplasmic. Residues 138–158 (IFGICCTIWVLVWTGSIPIYS) traverse the membrane as a helical segment. Residues 159–180 (FHGKVEKYMCFHNMSDDTWSAK) are Extracellular-facing. An N-linked (GlcNAc...) asparagine glycan is attached at N171. Residues 181–201 (VFFPLEVFGFLLPMGIMGFCC) form a helical membrane-spanning segment. Residues 202–231 (SRSIHILLGRRDHTQDWVQQKACIYSIAAS) lie on the Cytoplasmic side of the membrane. A helical transmembrane segment spans residues 232 to 252 (LAVFVVSFLPVHLGFFLQFLV). Residues 253–271 (RNSFIVECRAKQSISFFLQ) lie on the Extracellular side of the membrane. The helical transmembrane segment at 272–292 (LSMCFSNVNCCLDVFCYYFVI) threads the bilayer. Topologically, residues 293–319 (KEFRMNIRAHRPSRVQLVLQDTTISRG) are cytoplasmic.

This sequence belongs to the G-protein coupled receptor 1 family. Expressed in the caudate nucleus and putamen, but not detected in the hippocampus, thalamus, pons cerebellum, frontal cortex of the brain or in the liver. Expressed in osteoclasts and osteoblasts. Higly expressed in macrophages and B-cells.

The protein resides in the cell membrane. Functionally, G-protein coupled receptor that binds to several ligands including 2-arachidonoyl lysophosphatidylinositol or lysophosphatidylglucoside with high affinity, leading to rapid and transient activation of numerous intracellular signaling pathways. Induces the Ca(2+) release from intracellular stores via ERK, the heterotrimeric G protein GNA13 and RHOA leading to morphological changes including cell rounding and stress fiber formation. In macrophages, acts downstream of lysophosphatidylglucoside to inhibit the translocation of the phospholipid-transporting ABCA1 to plasma membrane and subsequent cholesterol efflux leading to lipid accumulation and foam cell formation. This chain is G-protein coupled receptor 55 (GPR55), found in Homo sapiens (Human).